Consider the following 96-residue polypeptide: Small ribosomal subunit protein uS17 (96 aa).

Belongs to the universal ribosomal protein uS17 family. As to quaternary structure, part of the 30S ribosomal subunit.

Its function is as follows. One of the primary rRNA binding proteins, it binds specifically to the 5'-end of 16S ribosomal RNA. In Deinococcus radiodurans (strain ATCC 13939 / DSM 20539 / JCM 16871 / CCUG 27074 / LMG 4051 / NBRC 15346 / NCIMB 9279 / VKM B-1422 / R1), this protein is Small ribosomal subunit protein uS17.